Here is a 281-residue protein sequence, read N- to C-terminus: Energy-coupling factor transporter ATP-binding protein EcfA1 (281 aa).

An ABC transporter domain is found at 7–242; the sequence is ISVEDIVFRY…NKELVRIGLD (236 aa). Residue 42–49 participates in ATP binding; the sequence is GHNGSGKS. Glu168 (proton acceptor) is an active-site residue.

This sequence belongs to the ABC transporter superfamily. Energy-coupling factor EcfA family. Forms a stable energy-coupling factor (ECF) transporter complex composed of 2 membrane-embedded substrate-binding proteins (S component), 2 ATP-binding proteins (A component) and 2 transmembrane proteins (T component).

Its subcellular location is the cell membrane. ATP-binding (A) component of a common energy-coupling factor (ECF) ABC-transporter complex. Unlike classic ABC transporters this ECF transporter provides the energy necessary to transport a number of different substrates. The chain is Energy-coupling factor transporter ATP-binding protein EcfA1 from Bacillus subtilis (strain 168).